The sequence spans 72 residues: Omega-conotoxin-like SVIA mutant 1 (72 aa).

Positions 1 to 22 are cleaved as a signal peptide; sequence MKLTCVVIVAVLLLTACQLITA. A propeptide spanning residues 23–48 is cleaved from the precursor; it reads EDSRGAQKHRTLRSTARRSKSELTTR. 3 cysteine pairs are disulfide-bonded: Cys49–Cys63, Cys56–Cys66, and Cys62–Cys71. Pro55 is modified (4-hydroxyproline).

This sequence belongs to the conotoxin O1 superfamily. Expressed by the venom duct.

The protein resides in the secreted. Functionally, omega-conotoxins act at presynaptic membranes, they bind and block voltage-gated calcium channels (Cav). In Conus striatus (Striated cone), this protein is Omega-conotoxin-like SVIA mutant 1.